Reading from the N-terminus, the 227-residue chain is Cytidylate kinase (227 aa).

12 to 20 (GPSGAGKGT) contributes to the ATP binding site.

The protein belongs to the cytidylate kinase family. Type 1 subfamily.

The protein resides in the cytoplasm. The enzyme catalyses CMP + ATP = CDP + ADP. The catalysed reaction is dCMP + ATP = dCDP + ADP. This is Cytidylate kinase from Enterobacter sp. (strain 638).